The chain runs to 337 residues: Transcription factor HBI1 (337 aa).

Positions 119–180 (VALKNKRKPE…SKGASENQKL (62 aa)) are disordered. Over residues 126 to 151 (KPEVKTREEQKTEKKIKVEAETESSM) the composition is skewed to basic and acidic residues. The span at 152 to 165 (KGKSNMGNTEASSD) shows a compositional bias: polar residues. The 51-residue stretch at 191–241 (QATDRHSLAERARREKISKKMKYLQDIVPGCNKVTGKAGMLDEIINYVQCL) folds into the bHLH domain.

Homodimer. Interacts with IBH1. As to expression, highly expressed in hypocotyls and cotyledons. Expressed in leaves, stems, and flowers.

It is found in the nucleus. Its function is as follows. Atypical bHLH transcription factor that acts as a positive regulator of cell elongation downstream of multiple external and endogenous signals by direct binding to the promoters and activation of the two expansin genes EXPA1 and EXPA8, encoding cell wall loosening enzymes. Transcriptional activity is inhibited when binding to the bHLH transcription factor IBH1. This Arabidopsis thaliana (Mouse-ear cress) protein is Transcription factor HBI1 (HBI1).